A 208-amino-acid chain; its full sequence is High frequency lysogenization protein HflD homolog (208 aa).

This sequence belongs to the HflD family.

Its subcellular location is the cytoplasm. The protein resides in the cell inner membrane. The protein is High frequency lysogenization protein HflD homolog of Edwardsiella ictaluri (strain 93-146).